Here is a 331-residue protein sequence, read N- to C-terminus: UDP-GalNAc:beta-1,3-N-acetylgalactosaminyltransferase 1 (331 aa).

Residues 1-20 (MASALWTVLPSRMSLRSLQW) lie on the Cytoplasmic side of the membrane. A helical; Signal-anchor for type II membrane protein transmembrane segment spans residues 21–43 (SLLLLSLLSFLVMWYLSLPHYNV). Over 44–331 (IERVNWMYFY…VMLRNTTCHY (288 aa)) the chain is Lumenal. N-linked (GlcNAc...) asparagine glycans are attached at residues Asn-72, Asn-154, Asn-198, Asn-212, and Asn-326.

It belongs to the glycosyltransferase 31 family. It depends on Mg(2+) as a cofactor.

The protein localises to the golgi apparatus membrane. The catalysed reaction is a globoside Gb3Cer (d18:1(4E)) + UDP-N-acetyl-alpha-D-galactosamine = a globoside Gb4Cer (d18:1(4E)) + UDP + H(+). It participates in protein modification; protein glycosylation. In terms of biological role, transfers N-acetylgalactosamine onto globotriaosylceramide. Plays a critical role in preimplantation stage embryonic development. This chain is UDP-GalNAc:beta-1,3-N-acetylgalactosaminyltransferase 1 (B3GALNT1), found in Pongo abelii (Sumatran orangutan).